A 63-amino-acid chain; its full sequence is Conotoxin LeDr243 (63 aa).

A signal peptide spans 1-22 (MRCLPVFVILLLLIASTPSIDA). The propeptide occupies 23–47 (RPKTKDDMPLASFNDNAKRILQILS). The residue at position 60 (Cys-60) is a Cysteine amide. The propeptide occupies 62-63 (LG).

The protein belongs to the conotoxin T superfamily. Post-translationally, contains 2 disulfide bonds that can be either 'C1-C3, C2-C4' or 'C1-C4, C2-C3', since these disulfide connectivities have been observed for conotoxins with cysteine framework V (for examples, see AC P0DQQ7 and AC P81755). In terms of tissue distribution, expressed by the venom duct.

It is found in the secreted. This Conus litteratus (Lettered cone) protein is Conotoxin LeDr243.